The sequence spans 455 residues: N(5)-hydroxyornithine:cis-anhydromevalonyl coenzyme A-N(5)-transacylase SIDF (455 aa).

The PTS1-type peroxisomal targeting signal motif lies at 453–455; it reads PKL.

This sequence belongs to the lysine N-acyltransferase mbtK family.

The protein resides in the peroxisome. Its pathway is siderophore biosynthesis. Functionally, hydroxyornithine transacylase; part of the gene cluster that mediates the biosynthesis of at least 11 siderophores, including beauverichelin A, dimerumic acid (DA), Na-dimethyl coprogen (NADC), eleutherazine B, ferricrocin (FC), fusarinine A, fusarinine C (FsC), metachelin A, mevalonolactone, rhodotorulic acid (RA) and tenellin. This cocktail of siderophores for iron metabolism is essential for virulence, and more specifically for the fungal virulence in penetrating through the host cuticle. Siderophore synthesis is also involved in conidial germination under iron-deficient conditions. For biosynthesis of fusarinine C, the transacylase SIDF transfers anhydromevalonyl to N(5)-hydroxyornithine. The required anhydromevalonyl-CoA moiety is derived from mevalonate by CoA ligation and dehydration catalyzed by SIDI and sidH respectively. In Beauveria bassiana (strain ARSEF 2860) (White muscardine disease fungus), this protein is N(5)-hydroxyornithine:cis-anhydromevalonyl coenzyme A-N(5)-transacylase SIDF.